The primary structure comprises 110 residues: Large ribosomal subunit protein P2 (110 aa).

Residues 63–110 (ASVPSGGGVAAAAPAAGGGGADPAEAKEEKKEEPEEESDDDMGFGLFD) are disordered. Residues 86-95 (AEAKEEKKEE) are compositionally biased toward basic and acidic residues.

The protein belongs to the eukaryotic ribosomal protein P1/P2 family. In terms of assembly, P1 and P2 exist as dimers at the large ribosomal subunit. In terms of processing, phosphorylated.

Plays an important role in the elongation step of protein synthesis. This Cryptochiton stelleri (Giant gumboot chiton) protein is Large ribosomal subunit protein P2.